The primary structure comprises 436 residues: ATP-dependent 6-phosphofructokinase (436 aa).

ATP-binding positions include G90, 155 to 156 (RG), and 180 to 183 (GDGT). D181 is a binding site for Mg(2+). Substrate contacts are provided by residues 209–211 (TID), 254–256 (MGR), E307, and 362–365 (YMIR). D211 (proton acceptor) is an active-site residue.

Belongs to the phosphofructokinase type A (PFKA) family. PPi-dependent PFK group II subfamily. Atypical ATP-dependent clade 'X' sub-subfamily. As to quaternary structure, homodimer. Aggregates to a homotetramer after activation by ATP. Mg(2+) is required as a cofactor.

The protein localises to the cytoplasm. It catalyses the reaction beta-D-fructose 6-phosphate + ATP = beta-D-fructose 1,6-bisphosphate + ADP + H(+). The protein operates within carbohydrate degradation; glycolysis; D-glyceraldehyde 3-phosphate and glycerone phosphate from D-glucose: step 3/4. Its activity is regulated as follows. Activated by nucleoside triphosphates. Inhibited by phosphoenolpyruvate. EDTA and biphosphonates play the role of inhibitors of kinase activity. Functionally, catalyzes the phosphorylation of D-fructose 6-phosphate to fructose 1,6-bisphosphate by ATP, the first committing step of glycolysis. This is ATP-dependent 6-phosphofructokinase (PPi-PFK) from Entamoeba histolytica (strain ATCC 30459 / HM-1:IMSS / ABRM).